The primary structure comprises 307 residues: Dof zinc finger protein DOF5.4 (307 aa).

The Dof-type zinc finger occupies L51–R105. Residues C53, C56, C78, and C81 each contribute to the Zn(2+) site. Positions V96–T147 are disordered. Positions K109–T123 are enriched in polar residues. The segment covering Q124–S133 has biased composition (basic and acidic residues). Residues S134–T147 are compositionally biased toward low complexity.

Its subcellular location is the nucleus. In terms of biological role, transcription factor that binds specifically to a 5'-AA[AG]G-3' consensus core sequence. Enhances the DNA binding of OBF transcription factors to OCS elements. In Arabidopsis thaliana (Mouse-ear cress), this protein is Dof zinc finger protein DOF5.4 (DOF5.4).